We begin with the raw amino-acid sequence, 380 residues long: MGIQGLAKLIADVAPSAIRENDIKSYFGRKVAIDASMSIYQFLIAVRQGGDVLQNEEGETTSHLMGMFYRTIRMMENGIKPVYVFDGKPPQLKSGELAKRSERRAEAEKQLQQAQAAGAETEVEKFTKRLVKVTKQHNDECKHLLSLMGIPYLDAPSEAEASCAALVKAGKVYAAATEDMDCLTFGSPVLMRHLTASEAKKLPIQEFHLSRILQELGLNQEQFVDLCILLGSDYCESIRGIGPKRAVDLIQKHKSIEEIVRRLDPNKYPVPENWLHKEAQQLFLEPEVLDPESVELKWSEPNEEELVRFMCGEKQFSEERIRSGVRRLSKSRQGSTQGRLDDFFKVTGSLSSAKRKEPEPKGAAKKKQRLGPAGKFKRGK.

The interval 1–104 (MGIQGLAKLI…GELAKRSERR (104 aa)) is N-domain. The residue at position 19 (Arg19) is a Symmetric dimethylarginine; by PRMT5. A Mg(2+)-binding site is contributed by Asp34. Positions 47 and 70 each coordinate DNA. Lys80 bears the N6-acetyllysine mark. Asp86 contacts Mg(2+). 2 positions are modified to symmetric dimethylarginine; by PRMT5: Arg100 and Arg104. The segment at 122–253 (EVEKFTKRLV…KRAVDLIQKH (132 aa)) is I-domain. Residues Glu158, Glu160, Asp179, and Asp181 each contribute to the Mg(2+) site. Position 158 (Glu158) interacts with DNA. Ser187 is subject to Phosphoserine; by CDK2. Arg192 carries the symmetric dimethylarginine; by PRMT5 modification. A Phosphoserine modification is found at Ser197. The DNA site is built by Gly231 and Asp233. Asp233 is a Mg(2+) binding site. A phosphoserine mark is found at Ser255, Ser293, and Ser335. Position 336 is a phosphothreonine (Thr336). Residues 336–344 (TQGRLDDFF) form an interaction with PCNA region. A disordered region spans residues 349–380 (SLSSAKRKEPEPKGAAKKKQRLGPAGKFKRGK). Lys354, Lys375, Lys377, and Lys380 each carry N6-acetyllysine. The span at 363–380 (AAKKKQRLGPAGKFKRGK) shows a compositional bias: basic residues.

This sequence belongs to the XPG/RAD2 endonuclease family. FEN1 subfamily. As to quaternary structure, interacts with PCNA. Three molecules of FEN1 bind to one PCNA trimer with each molecule binding to one PCNA monomer. PCNA stimulates the nuclease activity without altering cleavage specificity. The C-terminal domain binds EP300; can bind simultaneously to both PCNA and EP300. Interacts with DDX11; this interaction is direct and increases flap endonuclease activity of FEN1. Interacts with WDR4; regulating its endonuclease activity. Interacts with POLB. Requires Mg(2+) as cofactor. Post-translationally, acetylated by EP300. Acetylation inhibits both endonuclease and exonuclease activity. Acetylation also reduces DNA-binding activity but does not affect interaction with PCNA or EP300. In terms of processing, phosphorylation upon DNA damage induces relocalization to the nuclear plasma. Phosphorylation at Ser-187 by CDK2 occurs during late S-phase and results in dissociation from PCNA. Methylation at Arg-192 by PRMT5 impedes Ser-187 phosphorylation and increases interaction with PCNA.

It localises to the nucleus. The protein localises to the nucleolus. Its subcellular location is the nucleoplasm. The protein resides in the mitochondrion. Functionally, structure-specific nuclease with 5'-flap endonuclease and 5'-3' exonuclease activities involved in DNA replication and repair. During DNA replication, cleaves the 5'-overhanging flap structure that is generated by displacement synthesis when DNA polymerase encounters the 5'-end of a downstream Okazaki fragment. It enters the flap from the 5'-end and then tracks to cleave the flap base, leaving a nick for ligation. Also involved in the long patch base excision repair (LP-BER) pathway, by cleaving within the apurinic/apyrimidinic (AP) site-terminated flap. Acts as a genome stabilization factor that prevents flaps from equilibrating into structures that lead to duplications and deletions. Also possesses 5'-3' exonuclease activity on nicked or gapped double-stranded DNA, and exhibits RNase H activity. Also involved in replication and repair of rDNA and in repairing mitochondrial DNA. The sequence is that of Flap endonuclease 1 from Ovis aries (Sheep).